The chain runs to 466 residues: Ribulose bisphosphate carboxylase (466 aa).

Asn111 contributes to the substrate binding site. Residue Lys166 is the Proton acceptor of the active site. Lys168 lines the substrate pocket. Residues Lys191, Asp193, and Glu194 each coordinate Mg(2+). Lys191 carries the post-translational modification N6-carboxylysine. The active-site Proton acceptor is His287. Substrate contacts are provided by Arg288, His321, and Ser368.

This sequence belongs to the RuBisCO large chain family. Type II subfamily. Homodimer. The cofactor is Mg(2+).

It carries out the reaction 2 (2R)-3-phosphoglycerate + 2 H(+) = D-ribulose 1,5-bisphosphate + CO2 + H2O. The catalysed reaction is D-ribulose 1,5-bisphosphate + O2 = 2-phosphoglycolate + (2R)-3-phosphoglycerate + 2 H(+). Its function is as follows. RuBisCO catalyzes two reactions: the carboxylation of D-ribulose 1,5-bisphosphate, the primary event in carbon dioxide fixation, as well as the oxidative fragmentation of the pentose substrate. Both reactions occur simultaneously and in competition at the same active site. The polypeptide is Ribulose bisphosphate carboxylase (Rhodospirillum rubrum (strain ATCC 11170 / ATH 1.1.1 / DSM 467 / LMG 4362 / NCIMB 8255 / S1)).